A 409-amino-acid polypeptide reads, in one-letter code: 4-hydroxy-3-methylbut-2-en-1-yl diphosphate synthase (ferredoxin) (409 aa).

The span at 1-12 (MQTLDRPNAPTQ) shows a compositional bias: polar residues. The tract at residues 1 to 22 (MQTLDRPNAPTQQPYPEPVYPR) is disordered. Positions 314, 317, 348, and 355 each coordinate [4Fe-4S] cluster.

This sequence belongs to the IspG family. Requires [4Fe-4S] cluster as cofactor.

The catalysed reaction is (2E)-4-hydroxy-3-methylbut-2-enyl diphosphate + 2 oxidized [2Fe-2S]-[ferredoxin] + H2O = 2-C-methyl-D-erythritol 2,4-cyclic diphosphate + 2 reduced [2Fe-2S]-[ferredoxin] + H(+). It functions in the pathway isoprenoid biosynthesis; isopentenyl diphosphate biosynthesis via DXP pathway; isopentenyl diphosphate from 1-deoxy-D-xylulose 5-phosphate: step 5/6. In terms of biological role, converts 2C-methyl-D-erythritol 2,4-cyclodiphosphate (ME-2,4cPP) into 1-hydroxy-2-methyl-2-(E)-butenyl 4-diphosphate. The chain is 4-hydroxy-3-methylbut-2-en-1-yl diphosphate synthase (ferredoxin) from Synechococcus sp. (strain JA-2-3B'a(2-13)) (Cyanobacteria bacterium Yellowstone B-Prime).